A 223-amino-acid chain; its full sequence is Small ribosomal subunit protein uS3 (223 aa).

A KH type-2 domain is found at 38 to 106 (LKRELKEKLK…EVFIDILEVN (69 aa)).

This sequence belongs to the universal ribosomal protein uS3 family. In terms of assembly, part of the 30S ribosomal subunit. Forms a tight complex with proteins S10 and S14.

In terms of biological role, binds the lower part of the 30S subunit head. Binds mRNA in the 70S ribosome, positioning it for translation. The protein is Small ribosomal subunit protein uS3 of Acidobacterium capsulatum (strain ATCC 51196 / DSM 11244 / BCRC 80197 / JCM 7670 / NBRC 15755 / NCIMB 13165 / 161).